The chain runs to 455 residues: Phosphoglucosamine mutase (455 aa).

The Phosphoserine intermediate role is filled by serine 108. Mg(2+) contacts are provided by serine 108, aspartate 246, aspartate 248, and aspartate 250. The residue at position 108 (serine 108) is a Phosphoserine.

It belongs to the phosphohexose mutase family. The cofactor is Mg(2+). Activated by phosphorylation.

It carries out the reaction alpha-D-glucosamine 1-phosphate = D-glucosamine 6-phosphate. Functionally, catalyzes the conversion of glucosamine-6-phosphate to glucosamine-1-phosphate. The sequence is that of Phosphoglucosamine mutase from Frankia alni (strain DSM 45986 / CECT 9034 / ACN14a).